The following is an 87-amino-acid chain: U14-lycotoxin-Ls1b (87 aa).

The first 20 residues, 1–20, serve as a signal peptide directing secretion; that stretch reads MNSKVFVVLLLLALSTCVLS. Positions 21-66 constitute a WAP domain; sequence EKYCPTPRNTSCKKMNIRNNCCRDSDCTSNAFCCAEPCGNFCHKAS. 5 cysteine pairs are disulfide-bonded: cysteine 24-cysteine 54, cysteine 32-cysteine 58, cysteine 41-cysteine 53, cysteine 42-cysteine 80, and cysteine 47-cysteine 62.

The protein belongs to the venom protein 11 family. 01 (wap-1) subfamily. Post-translationally, contains 5 disulfide bonds. Expressed by the venom gland.

It is found in the secreted. In terms of biological role, has antibacterial activity. The sequence is that of U14-lycotoxin-Ls1b from Lycosa singoriensis (Wolf spider).